A 416-amino-acid polypeptide reads, in one-letter code: Ferrochelatase, mitochondrial (416 aa).

The N-terminal 47 residues, 1–47 (MAAALRSAGVLLRDRLLYGGSRACQPRRCQSGAATAAAATETAQRAR), are a transit peptide targeting the mitochondrion. Positions 41–62 (ETAQRARSPKPQAQPGNRKPRT) are disordered. Residue lysine 50 is modified to N6-acetyllysine. Protoporphyrin IX contacts are provided by arginine 108, tyrosine 116, and serine 123. Lysine 131 is subject to N6-succinyllysine. Residue cysteine 189 coordinates [2Fe-2S] cluster. Residue histidine 223 is part of the active site. N6-acetyllysine; alternate is present on lysine 283. The residue at position 283 (lysine 283) is an N6-succinyllysine; alternate. Aspartate 376 is a catalytic residue. Positions 396, 399, and 404 each coordinate [2Fe-2S] cluster. Position 408 is an N6-acetyllysine; alternate (lysine 408). Lysine 408 carries the N6-succinyllysine; alternate modification.

Belongs to the ferrochelatase family. As to quaternary structure, homodimer. Homotetramer. Interaction with PGRMC1; the interaction results in decreased FECH activity. Interacts with ABCB10 and SLC25A37; this interaction forms an oligomeric complex. Forms a complex with ABCB7 and ABCB10, where a dimeric FECH bridges ABCB7 and ABCB10 homodimers; this complex may be required for cellular iron homeostasis, mitochondrial function and heme biosynthesis. Interacts with ABCB7 and ABCB10. [2Fe-2S] cluster serves as cofactor.

It localises to the mitochondrion inner membrane. It catalyses the reaction heme b + 2 H(+) = protoporphyrin IX + Fe(2+). It functions in the pathway porphyrin-containing compound metabolism; protoheme biosynthesis; protoheme from protoporphyrin-IX: step 1/1. Its function is as follows. Catalyzes the ferrous insertion into protoporphyrin IX and participates in the terminal step in the heme biosynthetic pathway. This is Ferrochelatase, mitochondrial from Bos taurus (Bovine).